Reading from the N-terminus, the 229-residue chain is Non-structural protein P8 (229 aa).

2 consecutive transmembrane segments (helical) span residues 119–139 and 162–182; these read IIHMTLLVAAVVALLTSVCTL and SLNPMLGVVNLGATFIMMVCA.

The protein belongs to the orbivirus NS3 family. Forms homooligomers via coiled-coil motif. Interacts with host OPTN; this interaction inhibits innate immune response.

It is found in the host cell membrane. The protein localises to the host Golgi apparatus. Functionally, plays a role in the inhibition of host innate immune response. Interacts with host OPTN and thus inhibits the recruitment of TBK1 to the host Golgi apparatus. In turn, downstream partner IRF3 cannot be activated and IFN-beta production is impaired. Facilitates viral particle release either by increasing plasma membrane permeability through a viroporin-like activity or by viral budding. The chain is Non-structural protein P8 (Segment-10) from Bluetongue virus 1 (isolate Australia) (BTV 1).